We begin with the raw amino-acid sequence, 237 residues long: D-aminoacyl-tRNA deacylase (237 aa).

This sequence belongs to the DtdA deacylase family. As to quaternary structure, monomer. Zn(2+) is required as a cofactor.

It carries out the reaction a D-aminoacyl-tRNA + H2O = a tRNA + a D-alpha-amino acid + H(+). The catalysed reaction is glycyl-tRNA(Ala) + H2O = tRNA(Ala) + glycine + H(+). D-aminoacyl-tRNA deacylase with broad substrate specificity. By recycling D-aminoacyl-tRNA to D-amino acids and free tRNA molecules, this enzyme counteracts the toxicity associated with the formation of D-aminoacyl-tRNA entities in vivo. This is D-aminoacyl-tRNA deacylase from Metallosphaera sedula (strain ATCC 51363 / DSM 5348 / JCM 9185 / NBRC 15509 / TH2).